The following is a 395-amino-acid chain: Tyrosine--tRNA ligase 2 (395 aa).

The 'HIGH' region signature appears at 42–51 (PTAPDIHLGH). The 'KMSKS' region signature appears at 226-230 (KMSKS). K229 serves as a coordination point for ATP. Residues 334–394 (IAISNLLKEA…GKRKFARVTI (61 aa)) form the S4 RNA-binding domain.

The protein belongs to the class-I aminoacyl-tRNA synthetase family. TyrS type 2 subfamily. Homodimer.

It localises to the cytoplasm. It catalyses the reaction tRNA(Tyr) + L-tyrosine + ATP = L-tyrosyl-tRNA(Tyr) + AMP + diphosphate + H(+). In terms of biological role, catalyzes the attachment of tyrosine to tRNA(Tyr) in a two-step reaction: tyrosine is first activated by ATP to form Tyr-AMP and then transferred to the acceptor end of tRNA(Tyr). The protein is Tyrosine--tRNA ligase 2 of Vibrio cholerae serotype O1 (strain ATCC 39315 / El Tor Inaba N16961).